Consider the following 236-residue polypeptide: Small ribosomal subunit protein bS21m (236 aa).

The disordered stretch occupies residues 65 to 136 (KPAAGAAAGG…SSKPSPMQTW (72 aa)). Positions 107–131 (SNSSTSSSSSSSSSGGALYSSSKPS) are enriched in low complexity.

This sequence belongs to the bacterial ribosomal protein bS21 family. In terms of assembly, component of the mitochondrial small ribosomal subunit (mt-SSU). Mature N.crassa 74S mitochondrial ribosomes consist of a small (37S) and a large (54S) subunit. The 37S small subunit contains a 16S ribosomal RNA (16S mt-rRNA) and 32 different proteins. The 54S large subunit contains a 23S rRNA (23S mt-rRNA) and 42 different proteins.

It is found in the mitochondrion. In terms of biological role, component of the mitochondrial ribosome (mitoribosome), a dedicated translation machinery responsible for the synthesis of mitochondrial genome-encoded proteins, including at least some of the essential transmembrane subunits of the mitochondrial respiratory chain. The mitoribosomes are attached to the mitochondrial inner membrane and translation products are cotranslationally integrated into the membrane. This chain is Small ribosomal subunit protein bS21m (mrp21), found in Neurospora crassa (strain ATCC 24698 / 74-OR23-1A / CBS 708.71 / DSM 1257 / FGSC 987).